A 456-amino-acid chain; its full sequence is tRNA-2-methylthio-N(6)-dimethylallyladenosine synthase (456 aa).

Positions 6-123 (KHVYIETYGC…LPNLIEEAQR (118 aa)) constitute an MTTase N-terminal domain. Residues C15, C52, C86, C160, C164, and C167 each coordinate [4Fe-4S] cluster. In terms of domain architecture, Radical SAM core spans 146–380 (RAEGPTAYVS…RILEMAASIS (235 aa)). The TRAM domain occupies 381 to 444 (EAMVGTEQWV…KNSLRGRLIE (64 aa)).

This sequence belongs to the methylthiotransferase family. MiaB subfamily. As to quaternary structure, monomer. It depends on [4Fe-4S] cluster as a cofactor.

It localises to the cytoplasm. The catalysed reaction is N(6)-dimethylallyladenosine(37) in tRNA + (sulfur carrier)-SH + AH2 + 2 S-adenosyl-L-methionine = 2-methylsulfanyl-N(6)-dimethylallyladenosine(37) in tRNA + (sulfur carrier)-H + 5'-deoxyadenosine + L-methionine + A + S-adenosyl-L-homocysteine + 2 H(+). Catalyzes the methylthiolation of N6-(dimethylallyl)adenosine (i(6)A), leading to the formation of 2-methylthio-N6-(dimethylallyl)adenosine (ms(2)i(6)A) at position 37 in tRNAs that read codons beginning with uridine. This is tRNA-2-methylthio-N(6)-dimethylallyladenosine synthase from Dichelobacter nodosus (strain VCS1703A).